Consider the following 233-residue polypeptide: B-cell lymphoma/leukemia 10 (233 aa).

N-acetylmethionine is present on Met1. A CARD domain is found at 13-101 (LTEVKKDALE…QNFLIQKITD (89 aa)). Glycyl lysine isopeptide (Lys-Gly) (interchain with G-Cter in ubiquitin) cross-links involve residues Lys17, Lys31, and Lys63. The residue at position 138 (Ser138) is a Phosphoserine. The segment at 187-233 (FSSTTLPRPGDPGAPPLPPDLQLEEEGTCANSSEMFLPLRSRTVSRQ) is disordered. Positions 195–205 (PGDPGAPPLPP) are enriched in pro residues.

Homomultimer; homooligomerized following recruitment by CARD domain-containing proteins that form a nucleating helical template that recruits BCL10 via CARD-CARD interaction. Self-associates by CARD-CARD interaction and interacts with other CARD-proteins such as CARD9, CARD10, CARD11 and CARD14. Forms a complex with CARD14 and MALT1; resulting in the formation of a CBM (CARD14-BCL10-MALT1) complex. Forms a complex with CARD11 and MALT1; resulting in the formation of a CBM (CARD11-BCL10-MALT1) complex. Forms a complex with CARD9 and MALT1; resulting in the formation of a CBM (CARD9-BCL10-MALT1) complex. Found in a membrane raft complex, at least composed of BCL10, CARD11, DPP4 and IKBKB. Binds caspase-9 with its C-terminal domain. Interacts with TRAF2 and BIRC2/c-IAP2. Interacts with PELI2 and SOCS3; these interactions may be mutually exclusive. Phosphorylated. Phosphorylation results in dissociation from TRAF2 and binding to BIRC2/c-IAP2. Phosphorylated by IKBKB/IKKB. In terms of processing, ubiquitinated via both 'Lys-63'-linked and linear ('Met-1'-linked) polyubiquitin chains in response to T-cell receptor (TCR) activation. Ubiquitination is recognized by IKBKG/NEMO, the regulatory subunit of I-kappa-B kinase (IKK), and is required for TCR-induced NF-kappa-B activation. Linear ubiquitination at Lys-17, Lys-31 and Lys-63 is mediated by RNF31/HOIP; linear ubiquitination is recognized with much higher affinity than 'Lys-63'-linked ubiquitin by IKBKG/NEMO. CARD11 is required for linear ubiquitination by HOIP by promoting the targeting of BCL10 to RNF31/HOIP. Post-translationally, proteolytically cleaved by MALT1; required for T-cell activation. As to expression, ubiquitous.

Its subcellular location is the cytoplasm. The protein resides in the perinuclear region. The protein localises to the membrane raft. Functionally, plays a key role in both adaptive and innate immune signaling by bridging CARD domain-containing proteins to immune activation. Acts by channeling adaptive and innate immune signaling downstream of CARD domain-containing proteins CARD9, CARD11 and CARD14 to activate NF-kappa-B and MAP kinase p38 (MAPK11, MAPK12, MAPK13 and/or MAPK14) pathways which stimulate expression of genes encoding pro-inflammatory cytokines and chemokines. Recruited by activated CARD domain-containing proteins: homooligomerized CARD domain-containing proteins form a nucleating helical template that recruits BCL10 via CARD-CARD interaction, thereby promoting polymerization of BCL10, subsequent recruitment of MALT1 and formation of a CBM complex. This leads to activation of NF-kappa-B and MAP kinase p38 (MAPK11, MAPK12, MAPK13 and/or MAPK14) pathways which stimulate expression of genes encoding pro-inflammatory cytokines and chemokines. Activated by CARD9 downstream of C-type lectin receptors; CARD9-mediated signals are essential for antifungal immunity. Activated by CARD11 downstream of T-cell receptor (TCR) and B-cell receptor (BCR). Promotes apoptosis, pro-caspase-9 maturation and activation of NF-kappa-B via NIK and IKK. In Homo sapiens (Human), this protein is B-cell lymphoma/leukemia 10.